We begin with the raw amino-acid sequence, 471 residues long: MKLPNKLGPIHFIGIGGIGMSGIAEVMHNLGYTVQGSDAADNYNVKRLAEKGIRTFVGHRAENLAEAELVVVSTAIRRDNPELAMARERRLPVVRRAEMLAELMRFKSCVAVAGTHGKTTTTSLVATLLDAGGLDPTVINGGIINAYGTNARMGEGEWMVVEADESDGTFLKLPADIAIVTNIDPEHLDHFGSFDAIKDAFRAFIDNIPFYGFAVMCIDHPTVQDLVGRIEDRRIITYGENPQADVRLIDVDLRGGQSRFRVMIRDRRPGFRLEMEDLVLPMPGKHNALNATAALAVAHELGVAPEAIRRALAGFGGVKRRFTRTGEWNGAQIFDDYGHHPVEIKAVLKAARASTEGNVVAVVQPHRYTRLASLFDDFCTCFNDADTVIVAPVYAAGEAPIEGFDRDTLVAGLKSRGHRNAVALERSEDLAGLVNGLVGPGDYVVCLGAGNITQWAYALPGELSALGEKAA.

114–120 (GTHGKTT) lines the ATP pocket.

It belongs to the MurCDEF family.

Its subcellular location is the cytoplasm. It catalyses the reaction UDP-N-acetyl-alpha-D-muramate + L-alanine + ATP = UDP-N-acetyl-alpha-D-muramoyl-L-alanine + ADP + phosphate + H(+). Its pathway is cell wall biogenesis; peptidoglycan biosynthesis. Cell wall formation. This Methylobacterium sp. (strain 4-46) protein is UDP-N-acetylmuramate--L-alanine ligase.